The following is a 257-amino-acid chain: NAD-capped RNA hydrolase NudC (257 aa).

The substrate site is built by Lys25 and Arg69. Residues Cys98 and Cys101 each coordinate Zn(2+). Glu111 contributes to the substrate binding site. 2 residues coordinate Zn(2+): Cys116 and Cys119. Tyr124 is a substrate binding site. Positions 125–248 constitute a Nudix hydrolase domain; it reads PQIAPCIIVA…TVARRLIEDT (124 aa). Residues Ala158, Glu174, and Glu178 each contribute to the a divalent metal cation site. A Nudix box motif is present at residues 159–180; it reads GFVEVGETLEQAVAREVMEESG. 192–199 contributes to the substrate binding site; sequence QPWPFPQS. Residue Glu219 coordinates a divalent metal cation. Ala241 contacts substrate.

Belongs to the Nudix hydrolase family. NudC subfamily. As to quaternary structure, homodimer. Requires Mg(2+) as cofactor. Mn(2+) serves as cofactor. The cofactor is Zn(2+).

The enzyme catalyses a 5'-end NAD(+)-phospho-ribonucleoside in mRNA + H2O = a 5'-end phospho-adenosine-phospho-ribonucleoside in mRNA + beta-nicotinamide D-ribonucleotide + 2 H(+). It catalyses the reaction NAD(+) + H2O = beta-nicotinamide D-ribonucleotide + AMP + 2 H(+). It carries out the reaction NADH + H2O = reduced beta-nicotinamide D-ribonucleotide + AMP + 2 H(+). Functionally, mRNA decapping enzyme that specifically removes the nicotinamide adenine dinucleotide (NAD) cap from a subset of mRNAs by hydrolyzing the diphosphate linkage to produce nicotinamide mononucleotide (NMN) and 5' monophosphate mRNA. The NAD-cap is present at the 5'-end of some mRNAs and stabilizes RNA against 5'-processing. Has preference for mRNAs with a 5'-end purine. Catalyzes the hydrolysis of a broad range of dinucleotide pyrophosphates. This chain is NAD-capped RNA hydrolase NudC, found in Escherichia coli O45:K1 (strain S88 / ExPEC).